The sequence spans 141 residues: Hemoglobin subunit mu (141 aa).

A Globin domain is found at 1–141 (MLSAQERAQI…VAVVLTEKYR (141 aa)). The heme b site is built by histidine 58 and histidine 87.

Belongs to the globin family. Expressed in erythroid tissues.

The polypeptide is Hemoglobin subunit mu (HBM) (Homo sapiens (Human)).